A 608-amino-acid polypeptide reads, in one-letter code: Chaperone protein HtpG (608 aa).

Residues 1 to 332 (MQFQTEVNQL…VEDLPLNVSR (332 aa)) are a; substrate-binding. A b region spans residues 333-536 (EILQENQILK…KNKPDFAMQQ (204 aa)). Residues 537–608 (LLKQMGQEQN…LTKIINKAFS (72 aa)) form a c region.

Belongs to the heat shock protein 90 family. Homodimer.

The protein resides in the cytoplasm. In terms of biological role, molecular chaperone. Has ATPase activity. The polypeptide is Chaperone protein HtpG (Campylobacter jejuni subsp. jejuni serotype O:23/36 (strain 81-176)).